A 260-amino-acid chain; its full sequence is (+)-borneol dehydrogenase 1 (260 aa).

Residues 20–26 (GGASGIG), Asp44, 67–68 (DV), and 94–96 (NAG) contribute to the NAD(+) site. Ser148 acts as the Proton donor in catalysis. NAD(+)-binding residues include Tyr161, Lys165, and Thr196. The active-site Proton acceptor is Tyr161. Lys165 functions as the Proton donor/acceptor in the catalytic mechanism.

The protein belongs to the short-chain dehydrogenases/reductases (SDR) family.

It catalyses the reaction (1R,2S,4R)-borneol + NAD(+) = (1R,4R)-camphor + NADH + H(+). Functionally, involved in the biosynthesis of monoterpene natural products related to camphor. Catalayzes the oxidation of (+)-borneol to (+)-camphor. Shows absolute selectivity towards (+)-borneol. Catalyzes the oxidation of (+)-isoborneol to (-)-camphor. Shows absolute selectivity towards (+)-isoborneol. The polypeptide is (+)-borneol dehydrogenase 1 (Salvia officinalis (Sage)).